A 151-amino-acid chain; its full sequence is Probable cGMP 3',5'-cyclic phosphodiesterase subunit delta (151 aa).

The protein belongs to the PDE6D/unc-119 family. Interacts with Pde6.

It is found in the nucleus. Its subcellular location is the cytoplasm. The protein is Probable cGMP 3',5'-cyclic phosphodiesterase subunit delta of Drosophila simulans (Fruit fly).